The sequence spans 327 residues: GMP reductase (327 aa).

Cysteine 176 functions as the Thioimidate intermediate in the catalytic mechanism. Isoleucine 205–valine 228 contacts NADP(+).

The protein belongs to the IMPDH/GMPR family. GuaC type 2 subfamily.

It catalyses the reaction IMP + NH4(+) + NADP(+) = GMP + NADPH + 2 H(+). Functionally, catalyzes the irreversible NADPH-dependent deamination of GMP to IMP. It functions in the conversion of nucleobase, nucleoside and nucleotide derivatives of G to A nucleotides, and in maintaining the intracellular balance of A and G nucleotides. In Streptococcus agalactiae serotype III (strain NEM316), this protein is GMP reductase.